We begin with the raw amino-acid sequence, 393 residues long: Formate-dependent phosphoribosylglycinamide formyltransferase (393 aa).

Residues 22–23 and Glu82 each bind N(1)-(5-phospho-beta-D-ribosyl)glycinamide; that span reads EL. ATP is bound by residues Arg114, Lys155, 160-165, 195-198, and Glu203; these read SSGKGQ and EGFV. The region spanning 119–308 is the ATP-grasp domain; sequence RLAAEELGLV…EFALHVRAIL (190 aa). Residues Glu267 and Glu279 each coordinate Mg(2+). Residues Asp286, Lys356, and 363 to 364 each bind N(1)-(5-phospho-beta-D-ribosyl)glycinamide; that span reads RR.

This sequence belongs to the PurK/PurT family. As to quaternary structure, homodimer.

It catalyses the reaction N(1)-(5-phospho-beta-D-ribosyl)glycinamide + formate + ATP = N(2)-formyl-N(1)-(5-phospho-beta-D-ribosyl)glycinamide + ADP + phosphate + H(+). Its pathway is purine metabolism; IMP biosynthesis via de novo pathway; N(2)-formyl-N(1)-(5-phospho-D-ribosyl)glycinamide from N(1)-(5-phospho-D-ribosyl)glycinamide (formate route): step 1/1. Functionally, involved in the de novo purine biosynthesis. Catalyzes the transfer of formate to 5-phospho-ribosyl-glycinamide (GAR), producing 5-phospho-ribosyl-N-formylglycinamide (FGAR). Formate is provided by PurU via hydrolysis of 10-formyl-tetrahydrofolate. This Solidesulfovibrio magneticus (strain ATCC 700980 / DSM 13731 / RS-1) (Desulfovibrio magneticus) protein is Formate-dependent phosphoribosylglycinamide formyltransferase.